The primary structure comprises 227 residues: PKHD-type hydroxylase PHZ_c0292 (227 aa).

The Fe2OG dioxygenase domain maps to 78–178 (VVFPPLFNRY…RVCSFFWIQS (101 aa)). Fe cation-binding residues include His-96, Asp-98, and His-159. Arg-169 contacts 2-oxoglutarate.

The cofactor is Fe(2+). L-ascorbate serves as cofactor.

This is PKHD-type hydroxylase PHZ_c0292 from Phenylobacterium zucineum (strain HLK1).